Here is a 124-residue protein sequence, read N- to C-terminus: Large ribosomal subunit protein bL12 (124 aa).

The protein belongs to the bacterial ribosomal protein bL12 family. As to quaternary structure, homodimer. Part of the ribosomal stalk of the 50S ribosomal subunit. Forms a multimeric L10(L12)X complex, where L10 forms an elongated spine to which 2 to 4 L12 dimers bind in a sequential fashion. Binds GTP-bound translation factors.

Its function is as follows. Forms part of the ribosomal stalk which helps the ribosome interact with GTP-bound translation factors. Is thus essential for accurate translation. In Pelodictyon phaeoclathratiforme (strain DSM 5477 / BU-1), this protein is Large ribosomal subunit protein bL12.